The primary structure comprises 670 residues: NAD-dependent histone deacetylase SIR2 (670 aa).

2 disordered regions span residues 1 to 157 (MTEY…EHPI) and 235 to 263 (DNDD…PSPS). Acidic residues predominate over residues 45–68 (NEDVDVDADADVDADADADADAEE). Residues 69-81 (DAQKDILEETKAD) are compositionally biased toward basic and acidic residues. The span at 82-92 (ELDEVVDEYEE) shows a compositional bias: acidic residues. Polar residues predominate over residues 96–119 (SSNFNGTASDHVGITSSNTGSTAL). The segment covering 120 to 142 (AASSADTNSGSGNGTGTMATNGT) has biased composition (low complexity). Residues 239 to 261 (SLPQKNSSETKNVSDTYTATYPS) are compositionally biased toward polar residues. A Deacetylase sirtuin-type domain is found at 293–583 (RLTNFHTIDD…ALVAQKCGWD (291 aa)). NAD(+) is bound by residues 318 to 337 (GAGI…EGFY) and 400 to 403 (QNID). H420 serves as the catalytic Proton acceptor. Zn(2+) is bound by residues C428, C431, C452, and C455. Residues 527 to 529 (GTS), 552 to 554 (NKD), and C569 contribute to the NAD(+) site. Positions 617 to 670 (AELEAEEEKHLPLQQSTAALTPPVSLSADSPGRSSSSSPQPPTQTDIANNQTST) are disordered. The segment covering 641–654 (SLSADSPGRSSSSS) has biased composition (low complexity). Polar residues predominate over residues 659–670 (TQTDIANNQTST).

This sequence belongs to the sirtuin family. Class I subfamily. The cofactor is Zn(2+).

Its subcellular location is the nucleus. The enzyme catalyses N(6)-acetyl-L-lysyl-[protein] + NAD(+) + H2O = 2''-O-acetyl-ADP-D-ribose + nicotinamide + L-lysyl-[protein]. Functionally, NAD-dependent deacetylase, which asts as a key regulator of gene expression believed to help form modified chromatin structures on the genes it regulates. It is involved in telomeric silencing and in hm mating type loci silencing. This chain is NAD-dependent histone deacetylase SIR2 (SIR2), found in Kluyveromyces lactis (strain ATCC 8585 / CBS 2359 / DSM 70799 / NBRC 1267 / NRRL Y-1140 / WM37) (Yeast).